The primary structure comprises 153 residues: UPF0756 membrane protein Bcer98_3279 (153 aa).

Transmembrane regions (helical) follow at residues 8–28 (FLFI…IVAI), 54–74 (LGVT…EIGF), 87–107 (WIAL…LQLL), and 117–137 (LVFG…GPLI).

Belongs to the UPF0756 family.

Its subcellular location is the cell membrane. In Bacillus cytotoxicus (strain DSM 22905 / CIP 110041 / 391-98 / NVH 391-98), this protein is UPF0756 membrane protein Bcer98_3279.